The chain runs to 330 residues: D-cysteine desulfhydrase (330 aa).

Lysine 52 bears the N6-(pyridoxal phosphate)lysine mark.

Belongs to the ACC deaminase/D-cysteine desulfhydrase family. As to quaternary structure, homodimer. Pyridoxal 5'-phosphate is required as a cofactor.

It carries out the reaction D-cysteine + H2O = hydrogen sulfide + pyruvate + NH4(+) + H(+). In terms of biological role, catalyzes the alpha,beta-elimination reaction of D-cysteine and of several D-cysteine derivatives. It could be a defense mechanism against D-cysteine. The sequence is that of D-cysteine desulfhydrase from Yersinia pestis.